The chain runs to 633 residues: MAPQTKIDRSFSALTPALSEWIIDAVDAMGFVKTTPVQHAAIPMFMKNSDVVVEAVTGSGKTLAFLIPIVERLLREDAPTKKHHVGAIIISPTRELATQIHTVLSSLLKFHAPSAAMLEPDDEDTDMEDADTPPKPTFPPGTLKAVPQLLLGGSVTPAQDLSAFLKKSPNILIGTPGRLLELLRSPHVHCPQSSFDALVMDEADRLLDLGFKEDLQKIISRLPKQRRTGLFSASMSEAVDQLIRVGLRNPVRIAVKVKARATGEDGKIEDKRTPASLQMSYLVTPPSHKIPAMKKILSSLQPQPQKSILYLSTCFSVDYFQHVLPEVLQGYDIVPLHGKHPDKVRRKNFNKFVDSVTPSILLTTDVAARGLDIPSVDLVFQLDPPSDPKTFIHRCGRAGRAGRRGLAVTFLNPGREEDYIEFLQVRQTPISPLTTPEITVTDEDAKAVTSKIRKKVREDRALFDKAQRGFVSWVRAYSKHTASSIFRIDDLDWTELGNAWGLLTLPGMPELKKWQGDKRLGIELDLATYAYKDKAREKLRLEELERDKEEGTKKKQHKKEDREKSAWTEQKESKATKEVRREKKKSKREHERLAKMTDEERKEEDRVQAMIEQMRKKVAKQEAEDADFEGFSD.

The Q motif signature appears at 11 to 39 (FSALTPALSEWIIDAVDAMGFVKTTPVQH). The Helicase ATP-binding domain maps to 42-253 (IPMFMKNSDV…RVGLRNPVRI (212 aa)). 55–62 (AVTGSGKT) provides a ligand contact to ATP. Acidic residues predominate over residues 119–131 (EPDDEDTDMEDAD). Residues 119 to 140 (EPDDEDTDMEDADTPPKPTFPP) form a disordered region. The DEAD box signature appears at 201-204 (DEAD). Residues 292–446 (AMKKILSSLQ…EITVTDEDAK (155 aa)) form the Helicase C-terminal domain. Positions 530-629 (AYKDKAREKL…KQEAEDADFE (100 aa)) form a coiled coil. 2 stretches are compositionally biased toward basic and acidic residues: residues 547 to 581 (DKEEGTKKKQHKKEDREKSAWTEQKESKATKEVRR) and 588 to 623 (REHERLAKMTDEERKEEDRVQAMIEQMRKKVAKQEA). The disordered stretch occupies residues 547 to 633 (DKEEGTKKKQ…EDADFEGFSD (87 aa)). Residues 624 to 633 (EDADFEGFSD) are compositionally biased toward acidic residues.

Belongs to the DEAD box helicase family. DDX55/SPB4 subfamily. In terms of assembly, component of pre-60S ribosomal complexes.

Its subcellular location is the nucleus. The protein resides in the nucleolus. The catalysed reaction is ATP + H2O = ADP + phosphate + H(+). ATP-binding RNA helicase involved in the biogenesis of 60S ribosomal subunits. Binds 90S pre-ribosomal particles and dissociates from pre-60S ribosomal particles after processing of 27SB pre-rRNA. Required for the normal formation of 18S rRNA through the processing of pre-rRNAs at sites A0, A1 and A2, and the normal formation of 25S and 5.8S rRNAs through the processing of pre-rRNAs at sites C1 and C2. The sequence is that of ATP-dependent rRNA helicase SPB4 from Phaeosphaeria nodorum (strain SN15 / ATCC MYA-4574 / FGSC 10173) (Glume blotch fungus).